The chain runs to 241 residues: Glycerol-3-phosphate acyltransferase (241 aa).

The next 6 membrane-spanning stretches (helical) occupy residues 3–23 (ILYS…LLGS), 63–83 (IVFA…SAIV), 97–117 (YISP…PAYY), 131–151 (LIIS…LLVV), 156–176 (IVSL…WMPW), and 198–218 (LVNY…LVLV).

The protein belongs to the PlsY family. In terms of assembly, probably interacts with PlsX.

It localises to the cell membrane. It catalyses the reaction an acyl phosphate + sn-glycerol 3-phosphate = a 1-acyl-sn-glycero-3-phosphate + phosphate. It participates in lipid metabolism; phospholipid metabolism. Catalyzes the transfer of an acyl group from acyl-phosphate (acyl-PO(4)) to glycerol-3-phosphate (G3P) to form lysophosphatidic acid (LPA). This enzyme utilizes acyl-phosphate as fatty acyl donor, but not acyl-CoA or acyl-ACP. The polypeptide is Glycerol-3-phosphate acyltransferase (Mycoplasmopsis agalactiae (strain NCTC 10123 / CIP 59.7 / PG2) (Mycoplasma agalactiae)).